Reading from the N-terminus, the 392-residue chain is 8-amino-7-oxononanoate synthase (392 aa).

Arg26 is a binding site for substrate. Gly112–Phe113 contacts pyridoxal 5'-phosphate. Residue His137 participates in substrate binding. Pyridoxal 5'-phosphate is bound by residues Ser187, His215, and Thr241. The residue at position 244 (Lys244) is an N6-(pyridoxal phosphate)lysine. Thr357 contributes to the substrate binding site.

This sequence belongs to the class-II pyridoxal-phosphate-dependent aminotransferase family. BioF subfamily. Homodimer. Pyridoxal 5'-phosphate is required as a cofactor.

The enzyme catalyses 6-carboxyhexanoyl-[ACP] + L-alanine + H(+) = (8S)-8-amino-7-oxononanoate + holo-[ACP] + CO2. It functions in the pathway cofactor biosynthesis; biotin biosynthesis. Functionally, catalyzes the decarboxylative condensation of pimeloyl-[acyl-carrier protein] and L-alanine to produce 8-amino-7-oxononanoate (AON), [acyl-carrier protein], and carbon dioxide. The sequence is that of 8-amino-7-oxononanoate synthase from Photobacterium profundum (strain SS9).